Consider the following 420-residue polypeptide: Odorant receptor 63a (420 aa).

Over 1–43 (MYSPEEAAELKRRNYRSIREMIRLSYTVGFNLLDPSRCGQVLR) the chain is Cytoplasmic. A helical transmembrane segment spans residues 44–64 (IWTIVLSVSSLASLYGHWQML). Residues 65–76 (ARYIHDIPRIGE) lie on the Extracellular side of the membrane. Residues 77–97 (TAGTALQFLTSIAKMWYFLFA) form a helical membrane-spanning segment. The Cytoplasmic portion of the chain corresponds to 98–150 (HRQIYELLRKARCHELLQKCELFERMSDLPVIKEIRQQVESTMNRYWASTRRQ). The helical transmembrane segment at 151–171 (ILIYLYSCICITTNYFINSFV) threads the bilayer. Residues 172–217 (INLYRYFTKPKGSYDIMLPLPSLYPAWEHKGLEFPYYHIQMYLETC) lie on the Extracellular side of the membrane. A helical transmembrane segment spans residues 218 to 238 (SLYICGMCAVSFDGVFIVLCL). The Cytoplasmic segment spans residues 239–296 (HSVGLMRSLNQMVEQATSELVPPDRRVEYLRCCIYQYQRVANFATEVNNCFRHITFTQ). Residues 297–317 (FLLSLFNWGLALFQMSVGLGN) form a helical membrane-spanning segment. N-linked (GlcNAc...) asparagine glycosylation occurs at N318. Residues 318–320 (NSS) lie on the Extracellular side of the membrane. The helical transmembrane segment at 321-341 (ITMIRMTMYLVAAGYQIVVYC) threads the bilayer. Residues 342-387 (YNGQRFATASEEIANAFYQVRWYGESREFRHLIRMMLMRTNRGFRL) are Cytoplasmic-facing. Residues 388–408 (DVSWFMQMSLPTLMAMVRTSG) traverse the membrane as a helical segment. The Extracellular segment spans residues 409-420 (QYFLLLQNVNQK).

Belongs to the insect chemoreceptor superfamily. Heteromeric odorant receptor channel (TC 1.A.69) family. Or63a subfamily. In terms of assembly, interacts with Orco. Complexes exist early in the endomembrane system in olfactory sensory neurons (OSNs), coupling these complexes to the conserved ciliary trafficking pathway.

The protein resides in the cell membrane. In terms of biological role, odorant receptor which mediates acceptance or avoidance behavior, depending on its substrates. The odorant receptor repertoire encodes a large collection of odor stimuli that vary widely in identity, intensity, and duration. May form a complex with Orco to form odorant-sensing units, providing sensitive and prolonged odorant signaling and calcium permeability. Involved in the behavioral responses to butyl acetate, isoamyl acetate, and hexanoic acid. The chain is Odorant receptor 63a (Or63a) from Drosophila melanogaster (Fruit fly).